Consider the following 432-residue polypeptide: 3-phosphoshikimate 1-carboxyvinyltransferase (432 aa).

Lysine 23, serine 24, and arginine 28 together coordinate 3-phosphoshikimate. Phosphoenolpyruvate is bound at residue lysine 23. Phosphoenolpyruvate is bound by residues glycine 96 and arginine 125. 3-phosphoshikimate is bound by residues serine 170, glutamine 172, aspartate 318, and lysine 345. Glutamine 172 is a binding site for phosphoenolpyruvate. Aspartate 318 acts as the Proton acceptor in catalysis. Arginine 349 and arginine 391 together coordinate phosphoenolpyruvate.

This sequence belongs to the EPSP synthase family. In terms of assembly, monomer.

The protein localises to the cytoplasm. It catalyses the reaction 3-phosphoshikimate + phosphoenolpyruvate = 5-O-(1-carboxyvinyl)-3-phosphoshikimate + phosphate. It functions in the pathway metabolic intermediate biosynthesis; chorismate biosynthesis; chorismate from D-erythrose 4-phosphate and phosphoenolpyruvate: step 6/7. Catalyzes the transfer of the enolpyruvyl moiety of phosphoenolpyruvate (PEP) to the 5-hydroxyl of shikimate-3-phosphate (S3P) to produce enolpyruvyl shikimate-3-phosphate and inorganic phosphate. In Gloeobacter violaceus (strain ATCC 29082 / PCC 7421), this protein is 3-phosphoshikimate 1-carboxyvinyltransferase.